The primary structure comprises 342 residues: Signaling lymphocytic activation molecule (342 aa).

A signal peptide spans 1–26 (MDSRGFLSLRCLLVLALASKLSCGTG). At 27 to 237 (ESLMNCPEVP…CRPESSVPRQ (211 aa)) the chain is on the extracellular side. An Ig-like V-type domain is found at 29 to 138 (LMNCPEVPGK…QHFCLQLKLY (110 aa)). 7 N-linked (GlcNAc...) asparagine glycosylation sites follow: Asn-57, Asn-102, Asn-125, Asn-150, Asn-157, Asn-189, and Asn-217. An Ig-like C2-type domain is found at 144–223 (PEIKVLNWTQ…PVSNRSWSFN (80 aa)). 2 cysteine pairs are disulfide-bonded: Cys-158–Cys-228 and Cys-164–Cys-209. A helical membrane pass occupies residues 238 to 261 (WRLYAGLFLGGIVGVILIFEVVLL). The Cytoplasmic portion of the chain corresponds to 262 to 342 (LLRRRGKTNH…VYASVTFPES (81 aa)). The short motif at 282–287 (TIYAQV) is the ITSM 1 element. Phosphotyrosine; by FYN is present on residues Tyr-284, Tyr-310, and Tyr-334. An SH2-binding motif is present at residues 310–315 (YVAATE). The ITSM 2 signature appears at 332 to 337 (TVYASV).

As to quaternary structure, interacts (via cytoplasmic domain) with SH2D1A and SH2D1B; SH2D1A mediates association with FYN. Interacts (via cytoplasmic domain phosphorylated on tyrosine residues) with INPP5D and PTPN11; presence of SH2D1A facilitates binding to INPP5D. Interacts with MAP4K1. Interacts with PIK3C3, BECN1 and UVRAG; indicative for an association with PI3K complex II (PI3KC3-C2). Interacts with canine distemper virus HN protein; suggesting that it may serve as a receptor. Post-translationally, phosphorylated on tyrosine residues by FYN.

It localises to the cell membrane. Functionally, self-ligand receptor of the signaling lymphocytic activation molecule (SLAM) family. SLAM receptors triggered by homo- or heterotypic cell-cell interactions are modulating the activation and differentiation of a wide variety of immune cells and thus are involved in the regulation and interconnection of both innate and adaptive immune response. Activities are controlled by presence or absence of small cytoplasmic adapter proteins, SH2D1A/SAP and/or SH2D1B/EAT-2. SLAMF1-induced signal-transduction events in T-lymphocytes are different from those in B-cells. Two modes of SLAMF1 signaling seem to exist: one depending on SH2D1A (and perhaps SH2D1B) and another in which protein-tyrosine phosphatase 2C (PTPN11)-dependent signal transduction operates. Initially it has been proposed that association with SH2D1A prevents binding to inhibitory effectors including INPP5D/SHIP1 and PTPN11/SHP-2. However, signaling is also regulated by SH2D1A which can simultaneously interact with and recruit FYN which subsequently phosphorylates and activates SLAMF1. Mediates IL-2-independent proliferation of activated T cells during immune responses and induces IFN-gamma production. Downstreaming signaling involves INPP5D/SHIP1, DOK1 and DOK2 leading to inhibited IFN-gamma production in T-cells, and PRKCQ, BCL10 and NFKB1 leading to increased T-cell activation and Th2 cytokine production. Promotes T-cell receptor-induced IL-4 secretion by CD4(+) cells. Inhibits antigen receptor-mediated production of IFN-gamma, but not IL-2, in CD4(-)/CD8(-) T-cells. Required for IL-4 production by germinal centers T follicular helper (T(Fh))cells. May inhibit CD40-induced signal transduction in monocyte-derived dendritic cells. May play a role in allergic responses and may regulate allergen-induced Th2 cytokine and Th1 cytokine secretion. In conjunction with SLAMF6 controls the transition between positive selection and the subsequent expansion and differentiation of the thymocytic natural killer T (NKT) cell lineage. Involved in the peripheral differentiation of indifferent natural killer T (iNKT) cells toward a regulatory NKT2 type. In macrophages involved in down-regulation of IL-12, TNF-alpha and nitric oxide in response to lipopolysaccharide (LPS). In B-cells activates the ERK signaling pathway independently of SH2D1A but implicating both, SYK and INPP5D, and activates Akt signaling dependent on SYK and SH2D1A. In conjunction with SLAMF5 and SLAMF6 may be a negative regulator of the humoral immune response. The chain is Signaling lymphocytic activation molecule (SLAMF1) from Canis lupus familiaris (Dog).